Here is a 3461-residue protein sequence, read N- to C-terminus: Abnormal spindle-like microcephaly-associated protein homolog (3461 aa).

The disordered stretch occupies residues M1–E30. A phosphoserine mark is found at S279, S282, S367, S392, S426, and S606. Positions K921 to Q1057 constitute a Calponin-homology (CH) 1 domain. Positions V1058–T1077 form a coiled coil. S1104 carries the phosphoserine modification. The Calponin-homology (CH) 2 domain maps to S1111–L1262. 42 consecutive IQ domains span residues E1267–A1296, Q1348–Q1379, L1488–T1517, R1511–A1540, K1538–S1569, L1583–Q1614, T1633–K1662, I1656–K1685, M1729–S1758, Q1752–Q1783, M1775–R1804, V1802–K1831, Q1825–K1854, T1875–R1904, E1898–Q1929, L1948–Q1979, Q1971–Q2002, T2021–A2050, Y2044–Q2075, L2094–K2125, M2117–Q2148, I2167–Q2198, M2190–T2219, L2240–Q2271, L2313–Q2344, M2336–Q2367, Q2386–Q2417, M2409–Q2440, V2459–Q2490, Q2532–Q2563, R2666–Q2697, M2689–Q2720, L2739–A2768, Q2837–T2866, Q2860–Q2891, V2910–K2939, I2933–A2964, K2955–Q2986, R3030–T3059, L3080–H3111, Q3182–K3211, and I3205–S3236.

Its subcellular location is the cytoplasm. It localises to the cytoskeleton. The protein resides in the spindle. The protein localises to the nucleus. Functionally, probable role in mitotic spindle regulation and coordination of mitotic processes. May have a preferential role in regulating neurogenesis. The protein is Abnormal spindle-like microcephaly-associated protein homolog (ASPM) of Felis catus (Cat).